The chain runs to 213 residues: Putative amidate substrates transporter protein (213 aa).

The next 6 membrane-spanning stretches (helical) occupy residues 4–20, 32–48, 56–72, 116–132, 146–162, and 172–188; these read VGLFYVGAVLIIDGLML, LNFFVGGLQVVTPTVLI, AVIFAASGLYLFGFTYL, VIWLLWAVLWFMLFLLL, VAVAEGVITAAVPAFLI, and LPAAVIAVIGFAAVVLA.

The protein belongs to the AmiS/UreI family.

Its subcellular location is the cell membrane. Possible transporter that might be responsible for the adsorption of amidase substrates or release of their hydrolysis products. The polypeptide is Putative amidate substrates transporter protein (Mycolicibacterium smegmatis (Mycobacterium smegmatis)).